A 273-amino-acid chain; its full sequence is Inositol monophosphatase 1 (273 aa).

Mg(2+)-binding residues include Glu-71, Asp-91, Val-93, and Asp-94. Glu-71 contacts substrate. Substrate is bound by residues 93 to 96 (VDGT), 194 to 196 (GSC), and Asp-221. Asp-221 provides a ligand contact to Mg(2+).

This sequence belongs to the inositol monophosphatase superfamily. Mg(2+) is required as a cofactor. As to expression, expressed in seedlings, flowers, young and matures green fruits. Detected in roots and stems.

The enzyme catalyses a myo-inositol phosphate + H2O = myo-inositol + phosphate. It functions in the pathway polyol metabolism; myo-inositol biosynthesis; myo-inositol from D-glucose 6-phosphate: step 2/2. Its function is as follows. Responsible for the provision of inositol required for synthesis of phosphatidylinositol and polyphosphoinositides. The polypeptide is Inositol monophosphatase 1 (IMP1) (Solanum lycopersicum (Tomato)).